The following is a 384-amino-acid chain: Tryptophan--tRNA ligase (384 aa).

The 'HIGH' region motif lies at 81–89 (PSGPMHIGH). A 'KMSKS' region motif is present at residues 252–256 (KMSAS).

This sequence belongs to the class-I aminoacyl-tRNA synthetase family.

It is found in the cytoplasm. It carries out the reaction tRNA(Trp) + L-tryptophan + ATP = L-tryptophyl-tRNA(Trp) + AMP + diphosphate + H(+). This is Tryptophan--tRNA ligase from Thermococcus sibiricus (strain DSM 12597 / MM 739).